Reading from the N-terminus, the 455-residue chain is Epoxide hydrolase 1 (455 aa).

The chain crosses the membrane as a helical; Signal-anchor for type III membrane protein span at residues 1–21 (MWLELILASVLGFVIYWFVSR). Topologically, residues 22–455 (DKEETLPLED…RKFVSLAELQ (434 aa)) are cytoplasmic. D226 serves as the catalytic Nucleophile. A Dimethylated arginine modification is found at R295. Y374 (proton donor) is an active-site residue. The Proton acceptor role is filled by H431. At K439 the chain carries N6-acetyllysine.

It belongs to the peptidase S33 family.

The protein resides in the microsome membrane. It localises to the endoplasmic reticulum membrane. The enzyme catalyses cis-stilbene oxide + H2O = (1R,2R)-hydrobenzoin. The catalysed reaction is 1-(4-methoxyphenyl)-N-methyl-N-[(3-methyloxetan-3-yl)methyl]methanamine + H2O = 2-{[(4-methoxybenzyl)(methyl)amino]methyl}-2-methylpropane-1,3-diol. It catalyses the reaction 8,9-epoxy-(5Z,11Z,14Z)-eicosatrienoate + H2O = 8,9-dihydroxy-(5Z,11Z,14Z)-eicosatrienoate. It carries out the reaction 11,12-epoxy-(5Z,8Z,14Z)-eicosatrienoate + H2O = 11,12-dihydroxy-(5Z,8Z,14Z)-eicosatrienoate. The enzyme catalyses 2-(5Z,8Z,11Z,14Z-eicosatetraenoyl)-glycerol + H2O = glycerol + (5Z,8Z,11Z,14Z)-eicosatetraenoate + H(+). With respect to regulation, inhibited by 10-hydroxystearamide and methoxy-arachidonyl fluorophosphate. In terms of biological role, biotransformation enzyme that catalyzes the hydrolysis of arene and aliphatic epoxides to less reactive and more water soluble dihydrodiols by the trans addition of water. May play a role in the metabolism of endogenous lipids such as epoxide-containing fatty acids. Metabolizes the abundant endocannabinoid 2-arachidonoylglycerol (2-AG) to free arachidonic acid (AA) and glycerol. Binds 20(S)-hydroxycholesterol (20(S)-OHC). The polypeptide is Epoxide hydrolase 1 (Mus musculus (Mouse)).